The following is a 177-amino-acid chain: MNGGHIQLIIGPMLSGKSTELIRRVRRYQIAQYKCVTIKYSNDNRYGTGLWTHDKNNFAALEVTKLCDVLEAITDFSVIGIDEGQFFPDIVEFCERMANEGKIVIVAALDGTFQRRPFNNILNLIPLSEMVVKLTAVCMKCFKEASFSKRLGAETEIEIIGGNDMYQSVCRKCYIDS.

Gly-11–Ser-18 serves as a coordination point for ATP. Catalysis depends on Glu-83, which acts as the Proton acceptor. Phe-113 contributes to the substrate binding site. The Zn(2+) site is built by Cys-138 and Cys-141. Position 157-161 (Ile-157–Gly-161) interacts with substrate. Positions 170 and 173 each coordinate Zn(2+).

The protein belongs to the thymidine kinase family. In terms of assembly, homotetramer. Two molecules of substrate bind to each enzyme tetramer.

The catalysed reaction is thymidine + ATP = dTMP + ADP + H(+). Phosphorylates thymidine and thymidine analogs, such as azidothymidine (AZT). Part of the salvage pathway for pyrimidine deoxyribonucleotide synthesis. The sequence is that of Thymidine kinase (OPG101) from Monkeypox virus (strain Zaire-96-I-16) (MPX).